The primary structure comprises 163 residues: General stress protein 16O (163 aa).

Positions 19–30 are enriched in basic and acidic residues; it reads QKELSGEKKETE. 2 disordered regions span residues 19 to 55 and 115 to 163; these read QKEL…TLVT and ADVE…QDSK. Residues 89 to 123 form a dksA C4-type; degenerate zinc finger; the sequence is CEKTGQEIPYERLEAVPYARMTVEAQADVEDDLET. Residues 127–146 show a composition bias toward basic and acidic residues; that stretch reads SYEREFHEQVKDLSNKETID.

In Bacillus subtilis (strain 168), this protein is General stress protein 16O (yocK).